The primary structure comprises 384 residues: Dual-specificity RNA methyltransferase RlmN (384 aa).

Glu105 functions as the Proton acceptor in the catalytic mechanism. The region spanning 111–350 (EDDRATLCVS…TIVRKTRGDD (240 aa)) is the Radical SAM core domain. Cys118 and Cys355 are oxidised to a cystine. [4Fe-4S] cluster is bound by residues Cys125, Cys129, and Cys132. S-adenosyl-L-methionine is bound by residues 179 to 180 (GE), Ser211, 233 to 235 (SLH), and Asn312. Cys355 (S-methylcysteine intermediate) is an active-site residue.

The protein belongs to the radical SAM superfamily. RlmN family. [4Fe-4S] cluster serves as cofactor.

It is found in the cytoplasm. The catalysed reaction is adenosine(2503) in 23S rRNA + 2 reduced [2Fe-2S]-[ferredoxin] + 2 S-adenosyl-L-methionine = 2-methyladenosine(2503) in 23S rRNA + 5'-deoxyadenosine + L-methionine + 2 oxidized [2Fe-2S]-[ferredoxin] + S-adenosyl-L-homocysteine. It catalyses the reaction adenosine(37) in tRNA + 2 reduced [2Fe-2S]-[ferredoxin] + 2 S-adenosyl-L-methionine = 2-methyladenosine(37) in tRNA + 5'-deoxyadenosine + L-methionine + 2 oxidized [2Fe-2S]-[ferredoxin] + S-adenosyl-L-homocysteine. Its function is as follows. Specifically methylates position 2 of adenine 2503 in 23S rRNA and position 2 of adenine 37 in tRNAs. m2A2503 modification seems to play a crucial role in the proofreading step occurring at the peptidyl transferase center and thus would serve to optimize ribosomal fidelity. The sequence is that of Dual-specificity RNA methyltransferase RlmN from Escherichia coli O17:K52:H18 (strain UMN026 / ExPEC).